The primary structure comprises 971 residues: Translation initiation factor IF-2 (971 aa).

The span at 49 to 63 shows a compositional bias: basic and acidic residues; the sequence is HLRKSHGATDGDKRK. Disordered stretches follow at residues 49-86 and 101-385; these read HLRK…ARTI and DVAE…APTE. Over residues 105 to 114 the composition is skewed to low complexity; the sequence is GAEQGQAQVA. Residues 121 to 177 are compositionally biased toward basic and acidic residues; that stretch reads ELKRREEEARREAELLEKQAQELRERQERLEREEAERRAREEAAEAQRRRAEEEAAA. The span at 178–209 shows a compositional bias: low complexity; the sequence is KRAAAAAVEAQQVAAQQAAEAQQETAGAQSAQ. The span at 210–261 shows a compositional bias: basic and acidic residues; it reads DEARAAAERAAQREAAKKAEDAAREAADKTRAEQEEIRKRREAAEAEARAIR. Over residues 277–286 the composition is skewed to pro residues; the sequence is PPKPVEPPKP. The segment covering 298–325 has biased composition (low complexity); it reads KPAGASAARPAVKKPAGAAPATTAPAGA. The segment covering 355–368 has biased composition (gly residues); sequence SSGGVDRGWRGGPK. In terms of domain architecture, tr-type G spans 471–640; sequence PRPPVVTVMG…LLQAEVLELK (170 aa). The tract at residues 480-487 is G1; sequence GHVDHGKT. 480–487 provides a ligand contact to GTP; that stretch reads GHVDHGKT. A G2 region spans residues 505–509; that stretch reads GITQH. Positions 526 to 529 are G3; that stretch reads DTPG. GTP is bound by residues 526-530 and 580-583; these read DTPGH and NKID. A G4 region spans residues 580–583; the sequence is NKID. Residues 616–618 are G5; sequence SAK.

The protein belongs to the TRAFAC class translation factor GTPase superfamily. Classic translation factor GTPase family. IF-2 subfamily.

It is found in the cytoplasm. One of the essential components for the initiation of protein synthesis. Protects formylmethionyl-tRNA from spontaneous hydrolysis and promotes its binding to the 30S ribosomal subunits. Also involved in the hydrolysis of GTP during the formation of the 70S ribosomal complex. This is Translation initiation factor IF-2 from Burkholderia ambifaria (strain ATCC BAA-244 / DSM 16087 / CCUG 44356 / LMG 19182 / AMMD) (Burkholderia cepacia (strain AMMD)).